The primary structure comprises 213 residues: Small ribosomal subunit protein uS5 (213 aa).

The tract at residues 1 to 41 (MSGRERNGGRSAENNDKKERNERNGRNDRGGRNDRRNQQDE) is disordered. The 64-residue stretch at 45–108 (FIERVVTINR…EEARKNFFRV (64 aa)) folds into the S5 DRBM domain.

Belongs to the universal ribosomal protein uS5 family. Part of the 30S ribosomal subunit. Contacts proteins S4 and S8.

With S4 and S12 plays an important role in translational accuracy. Its function is as follows. Located at the back of the 30S subunit body where it stabilizes the conformation of the head with respect to the body. The sequence is that of Small ribosomal subunit protein uS5 from Corynebacterium jeikeium (strain K411).